A 123-amino-acid polypeptide reads, in one-letter code: Large ribosomal subunit protein bL12 (123 aa).

Belongs to the bacterial ribosomal protein bL12 family. Homodimer. Part of the ribosomal stalk of the 50S ribosomal subunit. Forms a multimeric L10(L12)X complex, where L10 forms an elongated spine to which 2 to 4 L12 dimers bind in a sequential fashion. Binds GTP-bound translation factors.

Forms part of the ribosomal stalk which helps the ribosome interact with GTP-bound translation factors. Is thus essential for accurate translation. In Dechloromonas aromatica (strain RCB), this protein is Large ribosomal subunit protein bL12.